The primary structure comprises 315 residues: MAFPEPKPRAPELPRKQLKTLDCGQGAVRAVRFNVDGNYCLTCGSDKTLKLWNPLRGTLLRTYSGHGYEVLDAAGSFDNSHLCSGGGDKTVVLWDVATGQVVRKFRGHAGKVNTVQFNEEATVILSGSIDSSVRCWDCRSRKPEPVQTLDEARDGISSVKVSDHEILAGSVDGRVRRYDLRMGQVTSDYVGSPITCTCFSRDGQCTLISSLDSTLRLLDKDTGELLGEYVGHKNQKYKLDCCLSERDTHVVSCSEDGKVFFWDLVEGSLALALPVGSNVVQSLAYHPADPCLLTAMGGSIQYWREETYEAEGGAG.

WD repeat units lie at residues 23–62 (CGQG…LLRT), 65–104 (GHGY…VVRK), 107–146 (GHAG…PEPV), 151–188 (EARD…VTSD), 190–228 (VGSP…LLGE), 231–272 (GHKN…LALA), and 275–313 (VGSN…AEGG).

Belongs to the WD repeat MORG1 family. In terms of assembly, interacts with EGLN3/PHD3. Interacts with ERK signaling proteins MAP2K1/MEK1, MAP2K2/MEK2, LAMTOR3, ARAF/Raf-1, MAPK1/ERK2 and MAPK3/ERK1. Identified in the spliceosome C complex. Interacts with PARD6B and CRB3. Interacts strongly with GTP-bound RRAGA but not with inactive GDP-bound. Interacts with p62/SQSTM1. Highly expressed in testis and brain. Expressed at intermediate level in heart, liver and kidney. Weakly expressed in spleen and lung and absent in muscle.

It localises to the cytoplasm. Its subcellular location is the lysosome. The protein resides in the nucleus. Its function is as follows. Molecular scaffold protein for various multimeric protein complexes. Acts as a module in the assembly of a multicomponent scaffold for the ERK pathway, linking ERK responses to specific agonists. At low concentrations it enhances ERK activation, whereas high concentrations lead to the inhibition of ERK activation. Also involved in response to hypoxia by acting as a negative regulator of HIF1A/HIF-1-alpha via its interaction with EGLN3/PHD3. May promote degradation of HIF1A. May act by recruiting signaling complexes to a specific upstream activator. May also be involved in pre-mRNA splicing. Participates in tight junction development by regulating apico-basal polarity, a key step in tissue development and organization. Mechanistically, regulates the translocation of PAR6-aPKC from the cytoplasm to the apical surface by acting as an adapter between PARD6B AND CRB3. Also acts as a negative regulator of mTORC1 under nutrient-rich conditions by binding to the active Rag GTPases to inhibit mTORC1 localization to the lysosome and phosphorylation of downstream targets. This facilitates constitutive basal autophagy during nutrient availability. The protein is WD repeat domain-containing protein 83 (Wdr83) of Rattus norvegicus (Rat).